Reading from the N-terminus, the 572-residue chain is Proline--tRNA ligase (572 aa).

It belongs to the class-II aminoacyl-tRNA synthetase family. ProS type 1 subfamily. As to quaternary structure, homodimer.

Its subcellular location is the cytoplasm. The catalysed reaction is tRNA(Pro) + L-proline + ATP = L-prolyl-tRNA(Pro) + AMP + diphosphate. Its function is as follows. Catalyzes the attachment of proline to tRNA(Pro) in a two-step reaction: proline is first activated by ATP to form Pro-AMP and then transferred to the acceptor end of tRNA(Pro). As ProRS can inadvertently accommodate and process non-cognate amino acids such as alanine and cysteine, to avoid such errors it has two additional distinct editing activities against alanine. One activity is designated as 'pretransfer' editing and involves the tRNA(Pro)-independent hydrolysis of activated Ala-AMP. The other activity is designated 'posttransfer' editing and involves deacylation of mischarged Ala-tRNA(Pro). The misacylated Cys-tRNA(Pro) is not edited by ProRS. This is Proline--tRNA ligase from Escherichia coli O157:H7.